We begin with the raw amino-acid sequence, 277 residues long: Type II restriction enzyme EcoRI (277 aa).

Residues D91, E111, and K113 contribute to the active site. Residues D91 and E111 each contribute to the Mg(2+) site.

It belongs to the EcoRI type II restriction endonuclease family. Homodimer. It depends on Mg(2+) as a cofactor.

It catalyses the reaction Endonucleolytic cleavage of DNA to give specific double-stranded fragments with terminal 5'-phosphates.. Its function is as follows. A P subtype restriction enzyme that recognizes the double-stranded sequence 5'-GAATTC-3' and cleaves after G-1. In Escherichia coli, this protein is Type II restriction enzyme EcoRI (ecoRIR).